A 171-amino-acid chain; its full sequence is uncharacterized protein (171 aa).

The protein to A.aeolicus aq_616.

This is an uncharacterized protein from Aquifex aeolicus (strain VF5).